The primary structure comprises 150 residues: D-aminoacyl-tRNA deacylase (150 aa).

Positions 138-139 (GP) match the Gly-cisPro motif, important for rejection of L-amino acids motif.

It belongs to the DTD family. Homodimer.

The protein localises to the cytoplasm. The enzyme catalyses glycyl-tRNA(Ala) + H2O = tRNA(Ala) + glycine + H(+). It catalyses the reaction a D-aminoacyl-tRNA + H2O = a tRNA + a D-alpha-amino acid + H(+). In terms of biological role, an aminoacyl-tRNA editing enzyme that deacylates mischarged D-aminoacyl-tRNAs. Also deacylates mischarged glycyl-tRNA(Ala), protecting cells against glycine mischarging by AlaRS. Acts via tRNA-based rather than protein-based catalysis; rejects L-amino acids rather than detecting D-amino acids in the active site. By recycling D-aminoacyl-tRNA to D-amino acids and free tRNA molecules, this enzyme counteracts the toxicity associated with the formation of D-aminoacyl-tRNA entities in vivo and helps enforce protein L-homochirality. This chain is D-aminoacyl-tRNA deacylase, found in Azobacteroides pseudotrichonymphae genomovar. CFP2.